The sequence spans 233 residues: Large ribosomal subunit protein uL1 (233 aa).

The protein belongs to the universal ribosomal protein uL1 family. As to quaternary structure, part of the 50S ribosomal subunit.

In terms of biological role, binds directly to 23S rRNA. The L1 stalk is quite mobile in the ribosome, and is involved in E site tRNA release. Functionally, protein L1 is also a translational repressor protein, it controls the translation of the L11 operon by binding to its mRNA. The chain is Large ribosomal subunit protein uL1 from Rhizobium etli (strain ATCC 51251 / DSM 11541 / JCM 21823 / NBRC 15573 / CFN 42).